A 188-amino-acid chain; its full sequence is Elongation factor P-like protein (188 aa).

It belongs to the elongation factor P family.

The chain is Elongation factor P-like protein from Marinobacter nauticus (strain ATCC 700491 / DSM 11845 / VT8) (Marinobacter aquaeolei).